The chain runs to 342 residues: Bifunctional terpene synthase Agr4 (342 aa).

4 residues coordinate Mg(2+): aspartate 87, asparagine 222, serine 226, and glutamate 230. Positions aspartate 87–aspartate 91 match the DDXXD motif motif. 2 residues coordinate (2E,6E)-farnesyl diphosphate: arginine 308 and tyrosine 309.

This sequence belongs to the terpene synthase family. Mg(2+) is required as a cofactor.

The enzyme catalyses (2E,6E)-farnesyl diphosphate = delta-cadinene + diphosphate. It catalyses the reaction (2E,6E)-farnesyl diphosphate = gamma-muurolene + diphosphate. The catalysed reaction is (2E,6E)-farnesyl diphosphate = beta-copaene + diphosphate. It carries out the reaction (2E)-geranyl diphosphate = beta-myrcene + diphosphate. Its function is as follows. Terpene cyclase that catalyzes the cyclization of farnesyl diphosphate (FPP) to various sesquiterpenes, including beta-copaene, alpha-cubebene, cadina-1(6),4-diene, gamma-muurolene, delta-cadinene, epizonarene, epicubenol and cubenol. Agr4 is also able to use the monoterpene precursor geranyl diphosphate (GPP) as substrates to synthesize the monoterpene beta-myrcene. Delta-cadinene is the major product of Agr4. The protein is Bifunctional terpene synthase Agr4 of Cyclocybe aegerita (Black poplar mushroom).